The chain runs to 329 residues: Prostaglandin reductase 1 (329 aa).

At threonine 18 the chain carries Phosphothreonine. A Phosphoserine modification is found at serine 20. Residues glycine 152–glycine 155, lysine 178, tyrosine 193, asparagine 217, cysteine 239–tyrosine 245, phenylalanine 270–valine 272, and asparagine 321 contribute to the NADP(+) site. Residue lysine 178 is modified to N6-(2-hydroxyisobutyryl)lysine; alternate. Lysine 178 carries the post-translational modification N6-acetyllysine; alternate.

It belongs to the NADP-dependent oxidoreductase L4BD family. Monomer or homodimer. In terms of tissue distribution, ubiquitously distributed in various tissues and leukocytes, the kidney and liver had the highest enzyme activities.

The protein resides in the cytoplasm. The catalysed reaction is 13,14-dihydro-15-oxo-prostaglandin E1 + NADP(+) = 15-oxoprostaglandin E1 + NADPH + H(+). It carries out the reaction 13,14-dihydro-15-oxo-prostaglandin E2 + NADP(+) = 15-oxoprostaglandin E2 + NADPH + H(+). The enzyme catalyses 13,14-dihydro-15-oxo-prostaglandin E2 + NAD(+) = 15-oxoprostaglandin E2 + NADH + H(+). It catalyses the reaction 13,14-dihydro-15-oxo-prostaglandin F1alpha + NADP(+) = 15-oxoprostaglandin F1alpha + NADPH + H(+). The catalysed reaction is 13,14-dihydro-15-oxo-PGF2alpha + NADP(+) = 15-oxoprostaglandin F2alpha + NADPH + H(+). It carries out the reaction leukotriene B4 + NADP(+) = 12-oxo-leukotriene B4 + NADPH + H(+). The enzyme catalyses 20-hydroxy-leukotriene B4 + NADP(+) = 12-oxo-20-hydroxy-leukotriene B4 + NADPH + H(+). It catalyses the reaction 6-trans-leukotriene B4 + NADP(+) = 12-oxo-(5S)-hydroxy-(6E,8E,10E,14Z)-eicosatetraenoate + NADPH + H(+). The catalysed reaction is (5S,12S)-dihydroxy-(6E,10E,12E,14Z)-eicosatetraenoate + NADP(+) = 12-oxo-(5S)-hydroxy-(6E,8E,10E,14Z)-eicosatetraenoate + NADPH + H(+). It carries out the reaction 15-oxo-(5S,6R)-dihydroxy-(7E,9E,11Z,13E)-eicosatetraenoate + NADH + H(+) = 15-oxo-(5S,6R)-dihydroxy-(7E,9E,11Z)-eicosatrienoate + NAD(+). The enzyme catalyses an n-alkanal + NADP(+) = an alk-2-enal + NADPH + H(+). It catalyses the reaction hexanal + NADP(+) = (E)-hex-2-enal + NADPH + H(+). The catalysed reaction is octanal + NADP(+) = (2E)-octenal + NADPH + H(+). It carries out the reaction decanal + NADP(+) = (2E)-decenal + NADPH + H(+). The enzyme catalyses dodecanal + NADP(+) = (2E)-dodecenal + NADPH + H(+). It catalyses the reaction 4-hydroxynonanal + NADP(+) = (E)-4-hydroxynon-2-enal + NADPH + H(+). The catalysed reaction is pentan-2-one + NADP(+) = (E)-pent-3-en-2-one + NADPH + H(+). It carries out the reaction nonan-2-one + NADP(+) = (3E)-nonen-2-one + NADPH + H(+). With respect to regulation, down-regulated by nonsteroidal anti-inflammatory drugs diclofenac, indomethacin and niflumic acid. Functionally, NAD(P)H-dependent oxidoreductase involved in metabolic inactivation of pro- and anti-inflammatory eicosanoids: prostaglandins (PG), leukotrienes (LT) and lipoxins (LX). Preferentially uses NADPH over NADH as cofactor. Catalyzes with high efficiency the reduction of the 13,14 double bond of 15-oxoPGs, including 15-oxo-PGE1, 15-oxo-PGE2, 15-oxo-PGF1-alpha and 15-oxo-PGF2-alpha. Catalyzes with lower efficiency the oxidation of the hydroxyl group at C12 of LTB4 and its derivatives, converting them into biologically less active 12-oxo-LTB4 metabolites. Reduces 15-oxo-LXA4 to 13,14 dihydro-15-oxo-LXA4 and may promote neutrophil recruitment at the inflammatory site. Plays a role in metabolic detoxification of alkenals and ketones. Reduces alpha,beta-unsaturated alkenals and ketones, particularly those with medium-chain length, showing highest affinity toward (2E)-decenal and (3E)-3-nonen-2-one. May inactivate 4-hydroxy-2-nonenal, a cytotoxic lipid constituent of oxidized low-density lipoprotein particles. This Sus scrofa (Pig) protein is Prostaglandin reductase 1 (PTGR1).